Consider the following 202-residue polypeptide: 3-isopropylmalate dehydratase small subunit (202 aa).

Belongs to the LeuD family. LeuD type 1 subfamily. In terms of assembly, heterodimer of LeuC and LeuD.

The enzyme catalyses (2R,3S)-3-isopropylmalate = (2S)-2-isopropylmalate. It functions in the pathway amino-acid biosynthesis; L-leucine biosynthesis; L-leucine from 3-methyl-2-oxobutanoate: step 2/4. Catalyzes the isomerization between 2-isopropylmalate and 3-isopropylmalate, via the formation of 2-isopropylmaleate. The chain is 3-isopropylmalate dehydratase small subunit from Rhizobium johnstonii (strain DSM 114642 / LMG 32736 / 3841) (Rhizobium leguminosarum bv. viciae).